A 257-amino-acid chain; its full sequence is Dihydroorotate dehydrogenase B (NAD(+)), electron transfer subunit (257 aa).

The 101-residue stretch at 2-102 (MKQEQMTVVR…LGPLGNGFPL (101 aa)) folds into the FAD-binding FR-type domain. FAD-binding positions include 53–56 (RPLS), 70–72 (IYR), and 77–78 (GT). Residues Cys-221, Cys-226, Cys-229, and Cys-244 each coordinate [2Fe-2S] cluster.

It belongs to the PyrK family. In terms of assembly, heterotetramer of 2 PyrK and 2 PyrD type B subunits. It depends on [2Fe-2S] cluster as a cofactor. FAD serves as cofactor.

The protein operates within pyrimidine metabolism; UMP biosynthesis via de novo pathway; orotate from (S)-dihydroorotate (NAD(+) route): step 1/1. In terms of biological role, responsible for channeling the electrons from the oxidation of dihydroorotate from the FMN redox center in the PyrD type B subunit to the ultimate electron acceptor NAD(+). This is Dihydroorotate dehydrogenase B (NAD(+)), electron transfer subunit from Geobacillus sp. (strain WCH70).